Consider the following 75-residue polypeptide: ATP synthase subunit c (75 aa).

Transmembrane regions (helical) follow at residues 4-24 (GLIA…GLGQ) and 54-74 (AVAE…MFAF).

The protein belongs to the ATPase C chain family. In terms of assembly, F-type ATPases have 2 components, F(1) - the catalytic core - and F(0) - the membrane proton channel. F(1) has five subunits: alpha(3), beta(3), gamma(1), delta(1), epsilon(1). F(0) has three main subunits: a(1), b(2) and c(10-14). The alpha and beta chains form an alternating ring which encloses part of the gamma chain. F(1) is attached to F(0) by a central stalk formed by the gamma and epsilon chains, while a peripheral stalk is formed by the delta and b chains.

It is found in the cell membrane. Functionally, f(1)F(0) ATP synthase produces ATP from ADP in the presence of a proton or sodium gradient. F-type ATPases consist of two structural domains, F(1) containing the extramembraneous catalytic core and F(0) containing the membrane proton channel, linked together by a central stalk and a peripheral stalk. During catalysis, ATP synthesis in the catalytic domain of F(1) is coupled via a rotary mechanism of the central stalk subunits to proton translocation. In terms of biological role, key component of the F(0) channel; it plays a direct role in translocation across the membrane. A homomeric c-ring of between 10-14 subunits forms the central stalk rotor element with the F(1) delta and epsilon subunits. The chain is ATP synthase subunit c from Mycoplasmopsis agalactiae (strain NCTC 10123 / CIP 59.7 / PG2) (Mycoplasma agalactiae).